The following is a 242-amino-acid chain: Tryptophan synthase alpha chain (242 aa).

Active-site proton acceptor residues include Glu32 and Asp43.

Belongs to the TrpA family. In terms of assembly, tetramer of two alpha and two beta chains.

It localises to the plastid. The protein resides in the chloroplast. It carries out the reaction (1S,2R)-1-C-(indol-3-yl)glycerol 3-phosphate + L-serine = D-glyceraldehyde 3-phosphate + L-tryptophan + H2O. The protein operates within amino-acid biosynthesis; L-tryptophan biosynthesis; L-tryptophan from chorismate: step 5/5. Functionally, the alpha subunit is responsible for the aldol cleavage of indoleglycerol phosphate to indole and glyceraldehyde 3-phosphate. This chain is Tryptophan synthase alpha chain, found in Cyanidium caldarium (Red alga).